The sequence spans 199 residues: Probable chemoreceptor glutamine deamidase CheD (199 aa).

This sequence belongs to the CheD family.

It catalyses the reaction L-glutaminyl-[protein] + H2O = L-glutamyl-[protein] + NH4(+). Functionally, probably deamidates glutamine residues to glutamate on methyl-accepting chemotaxis receptors (MCPs), playing an important role in chemotaxis. In Cereibacter sphaeroides (strain ATCC 17025 / ATH 2.4.3) (Rhodobacter sphaeroides), this protein is Probable chemoreceptor glutamine deamidase CheD.